The chain runs to 572 residues: Oxygen-dependent choline dehydrogenase (572 aa).

Asp9–Glu38 is a binding site for FAD. Residue His477 is the Proton acceptor of the active site.

This sequence belongs to the GMC oxidoreductase family. Requires FAD as cofactor.

The catalysed reaction is choline + A = betaine aldehyde + AH2. The enzyme catalyses betaine aldehyde + NAD(+) + H2O = glycine betaine + NADH + 2 H(+). The protein operates within amine and polyamine biosynthesis; betaine biosynthesis via choline pathway; betaine aldehyde from choline (cytochrome c reductase route): step 1/1. In terms of biological role, involved in the biosynthesis of the osmoprotectant glycine betaine. Catalyzes the oxidation of choline to betaine aldehyde and betaine aldehyde to glycine betaine at the same rate. The sequence is that of Oxygen-dependent choline dehydrogenase from Staphylococcus epidermidis (strain ATCC 12228 / FDA PCI 1200).